A 128-amino-acid chain; its full sequence is MSPKRIISTPLAPQPIGPYSQAVQVGNTVYLSGQIGMNVRTNEMVTGPIRDEAQQAFTNMKAVVEASGAKMSDVVKVNIFIRNFNDFPAINDVMKEFFQSPFPARSTVGVAELPKNARVEIESIVVIE.

Belongs to the RutC family.

It is found in the cytoplasm. The enzyme catalyses 2-iminobutanoate + H2O = 2-oxobutanoate + NH4(+). It catalyses the reaction 2-iminopropanoate + H2O = pyruvate + NH4(+). Catalyzes the hydrolytic deamination of enamine/imine intermediates that form during the course of normal metabolism. May facilitate the release of ammonia from these potentially toxic reactive metabolites, reducing their impact on cellular components. It may act on enamine/imine intermediates formed by several types of pyridoxal-5'-phosphate-dependent dehydratases including L-threonine dehydratase. Preferentially digests Leu and Met in cooperation with L-amino acid oxidase, but digests Phe poorly. The protein is 2-iminobutanoate/2-iminopropanoate deaminase of Dermatophagoides farinae (American house dust mite).